A 615-amino-acid polypeptide reads, in one-letter code: Delta-like protein B (615 aa).

The N-terminal stretch at 1-20 (MAHLSLYCLLSVSLLQLVAS) is a signal peptide. Over 21 to 522 (SGVFELKVHS…VGQTSPSAVA (502 aa)) the chain is Extracellular. The region spanning 159-203 (VFCDEFYFGEACSDYCRPRDDTLGHYTCDENGNKECLVGWQGDYC) is the DSL domain. Intrachain disulfides connect cysteine 161–cysteine 170, cysteine 174–cysteine 186, cysteine 194–cysteine 203, cysteine 208–cysteine 219, cysteine 212–cysteine 225, cysteine 227–cysteine 236, cysteine 245–cysteine 250, cysteine 258–cysteine 267, cysteine 274–cysteine 286, cysteine 280–cysteine 296, cysteine 298–cysteine 307, cysteine 314–cysteine 325, cysteine 319–cysteine 334, cysteine 336–cysteine 345, cysteine 352–cysteine 363, cysteine 357–cysteine 373, cysteine 375–cysteine 384, cysteine 391–cysteine 402, cysteine 396–cysteine 411, cysteine 413–cysteine 422, cysteine 429–cysteine 440, cysteine 434–cysteine 449, cysteine 451–cysteine 460, cysteine 467–cysteine 478, cysteine 472–cysteine 487, and cysteine 489–cysteine 498. EGF-like domains are found at residues 204–237 (SDPI…PSCS), 241–268 (HYPG…LFCN), and 270–308 (DLNY…TNCE). Residues 310-346 (EINECDCNPCKNGGSCNDLENDYSCTCPQGFYGKNCE) enclose the EGF-like 4; calcium-binding domain. 2 EGF-like domains span residues 348-385 (IAMT…SNCE) and 387-423 (RLDR…SRCE). Residues 425-461 (NIDDCARYPCQNAGTCQDGINDYTCTCTLGFTGKNCS) form the EGF-like 7; calcium-binding domain. An N-linked (GlcNAc...) asparagine glycan is attached at asparagine 459. The EGF-like 8 domain maps to 463-499 (RADACLTNPCLHGGTCFTHFSGPVCQCVPGFMGSTCE). The helical transmembrane segment at 523–543 (VSCVLGVLAVFLGVCVGLVVL) threads the bilayer. Over 544–615 (RRRRHRLRRQ…FLWSAGGGLR (72 aa)) the chain is Cytoplasmic.

Ubiquitinated by mib, leading to its endocytosis and subsequent degradation.

It localises to the membrane. Its function is as follows. Acts as a ligand for Notch receptors and is involved in primary neurogenesis. Can activate Notch receptors, thereby playing a key role in lateral inhibition, a process that prevents the immediate neighbors of each nascent neural cell from simultaneously embarking on neural differentiation. This Danio rerio (Zebrafish) protein is Delta-like protein B (dlb).